Here is a 533-residue protein sequence, read N- to C-terminus: Subtilisin-like protease 1 (533 aa).

An N-terminal signal peptide occupies residues 1 to 19; the sequence is MGVFRFISISLAAVSAANA. The propeptide occupies 20 to 116; the sequence is AQILSMPHAQ…VEPDTIISVH (97 aa). The 82-residue stretch at 34–115 folds into the Inhibitor I9 domain; the sequence is SYIVMMKDDT…FVEPDTIISV (82 aa). The Peptidase S8 domain occupies 126–400; that stretch reads SWGLARISNP…NVLINNGGAK (275 aa). Catalysis depends on charge relay system residues D158 and H190. The segment at 175 to 198 is disordered; sequence GSNQVNDGDDRDGSGHGTHTSGTM. Residues N233 and N251 are each glycosylated (N-linked (GlcNAc...) asparagine). The span at 282–294 shows a compositional bias: polar residues; sequence NDNQDAQSSSPAS. The interval 282–312 is disordered; the sequence is NDNQDAQSSSPASEPSVCTVGSSAEDDSRSS. Catalysis depends on S345, which acts as the Charge relay system. Residues 378-394 are compositionally biased toward polar residues; sequence TSSITDAGPGTPTNVLI. The segment at 378-512 is disordered; sequence TSSITDAGPG…YPGGDNFDFD (135 aa). Residues 405–470 are compositionally biased toward pro residues; that stretch reads NPNPAPSPSP…FPGEPFPGEP (66 aa). Positions 471-487 are enriched in low complexity; that stretch reads FPGESFPGESFPGESAP. Positions 488–502 are enriched in pro residues; that stretch reads APAPMPPSPQHPHTP.

It belongs to the peptidase S8 family.

It is found in the secreted. In terms of biological role, secreted subtilisin-like serine protease with keratinolytic activity that contributes to pathogenicity. The protein is Subtilisin-like protease 1 (SUB1) of Arthroderma benhamiae (strain ATCC MYA-4681 / CBS 112371) (Trichophyton mentagrophytes).